We begin with the raw amino-acid sequence, 256 residues long: Small ribosomal subunit protein bS18m (256 aa).

Residues 19–106 (GQRTAQFSTT…GGQRYGSNSQ (88 aa)) are disordered. Over residues 21-30 (RTAQFSTTSP) the composition is skewed to polar residues. Residues 44–66 (NAPRTNTNTSSPSSNNNNNAGSS) show a composition bias toward low complexity.

Belongs to the bacterial ribosomal protein bS18 family. As to quaternary structure, component of the mitochondrial small ribosomal subunit (mt-SSU). Mature N.crassa 74S mitochondrial ribosomes consist of a small (37S) and a large (54S) subunit. The 37S small subunit contains a 16S ribosomal RNA (16S mt-rRNA) and 32 different proteins. The 54S large subunit contains a 23S rRNA (23S mt-rRNA) and 42 different proteins.

Its subcellular location is the mitochondrion. Component of the mitochondrial ribosome (mitoribosome), a dedicated translation machinery responsible for the synthesis of mitochondrial genome-encoded proteins, including at least some of the essential transmembrane subunits of the mitochondrial respiratory chain. The mitoribosomes are attached to the mitochondrial inner membrane and translation products are cotranslationally integrated into the membrane. The chain is Small ribosomal subunit protein bS18m (rsm18) from Neurospora crassa (strain ATCC 24698 / 74-OR23-1A / CBS 708.71 / DSM 1257 / FGSC 987).